Reading from the N-terminus, the 487-residue chain is GTPase Der (487 aa).

2 EngA-type G domains span residues 3–166 (PVIA…PRDA) and 193–366 (IKIA…QSAV). Residues 9 to 16 (GRPNVGKS), 56 to 60 (DTGGI), 118 to 121 (NKID), 199 to 206 (GRPNVGKS), 246 to 250 (DTAGV), and 311 to 314 (NKWD) contribute to the GTP site. One can recognise a KH-like domain in the interval 367–451 (TRWPTSRLTQ…PIRIEYKGGE (85 aa)). The span at 448-461 (KGGENPYEGKKNTL) shows a compositional bias: basic and acidic residues. A disordered region spans residues 448 to 487 (KGGENPYEGKKNTLTDRQVNKKRRLMSHHKKAEKKRRDKR). Over residues 467 to 487 (NKKRRLMSHHKKAEKKRRDKR) the composition is skewed to basic residues.

Belongs to the TRAFAC class TrmE-Era-EngA-EngB-Septin-like GTPase superfamily. EngA (Der) GTPase family. Associates with the 50S ribosomal subunit.

Functionally, GTPase that plays an essential role in the late steps of ribosome biogenesis. The polypeptide is GTPase Der (Pseudomonas putida (strain ATCC 47054 / DSM 6125 / CFBP 8728 / NCIMB 11950 / KT2440)).